Consider the following 697-residue polypeptide: Elongation factor G (697 aa).

Residues 8-283 (EHIRNIGICA…AVVDFLPSPT (276 aa)) form the tr-type G domain. GTP-binding positions include 17–24 (AHIDAGKT), 81–85 (DTPGH), and 135–138 (NKMD).

It belongs to the TRAFAC class translation factor GTPase superfamily. Classic translation factor GTPase family. EF-G/EF-2 subfamily.

The protein resides in the cytoplasm. Its function is as follows. Catalyzes the GTP-dependent ribosomal translocation step during translation elongation. During this step, the ribosome changes from the pre-translocational (PRE) to the post-translocational (POST) state as the newly formed A-site-bound peptidyl-tRNA and P-site-bound deacylated tRNA move to the P and E sites, respectively. Catalyzes the coordinated movement of the two tRNA molecules, the mRNA and conformational changes in the ribosome. This Rickettsia rhipicephali protein is Elongation factor G.